A 448-amino-acid chain; its full sequence is Fibulin-5 (448 aa).

The first 23 residues, 1–23 (MPGLKRILTVTILALWLPHPGNA), serve as a signal peptide directing secretion. The region spanning 42–82 (DIDECRTIPEACRGDMMCVNQNGGYLCIPRTNPVYRGPYSN) is the EGF-like 1; calcium-binding domain. Cystine bridges form between C46/C59, C53/C68, C131/C144, C138/C153, C155/C166, C172/C181, C177/C190, C192/C205, C211/C221, C217/C230, C232/C245, C251/C262, C258/C271, C273/C286, C292/C305, C299/C314, and C320/C332. A Cell attachment site motif is present at residues 54 to 56 (RGD). Residues 127 to 167 (DVDECATDSHQCNPTQICINTEGGYTCSCTDGYWLLEGQCL) form the EGF-like 2; calcium-binding domain. In terms of domain architecture, EGF-like 3; calcium-binding spans 168–206 (DIDECRYGYCQQLCANVPGSYSCTCNPGFTLNDDGRSCQ). The EGF-like 4; calcium-binding domain occupies 207 to 246 (DVNECETENPCVQTCVNTYGSFICRCDPGYELEEDGIHCS). Positions 245 to 448 (CSDMDECSFS…LRIYVSQYPF (204 aa)) are interaction with LOXL1. The EGF-like 5; calcium-binding domain occupies 247–287 (DMDECSFSEFLCQHECVNQPGSYFCSCPPGYVLLDDNRSCQ). N-linked (GlcNAc...) asparagine glycosylation is found at N283 and N296. Positions 288–333 (DINECEHRNHTCTSLQTCYNLQGGFKCIDPISCEEPYLLIGENRCM) constitute an EGF-like 6; calcium-binding domain.

The protein belongs to the fibulin family. As to quaternary structure, homodimer. Monomer, homodimerizes in presence of Ca(2+). Interacts with ELN. Interacts (via N-terminus) with the integrins ITGAV/ITGB3, ITGAV/ITGB5 and ITGA9/ITGB1. Interacts with FBN1 (via N-terminal domain). Forms a ternary complex with ELN and FBN1. Interacts with EFEMP2 with moderate affinity. Interacts with LOXL1. N-glycosylated.

Its subcellular location is the secreted. It is found in the extracellular space. It localises to the extracellular matrix. Essential for elastic fiber formation, is involved in the assembly of continuous elastin (ELN) polymer and promotes the interaction of microfibrils and ELN. Stabilizes and organizes elastic fibers in the skin, lung and vasculature. Promotes adhesion of endothelial cells through interaction of integrins and the RGD motif. Vascular ligand for integrin receptors which may play a role in vascular development and remodeling. May act as an adapter that mediates the interaction between FBN1 and ELN. The sequence is that of Fibulin-5 (Fbln5) from Mus musculus (Mouse).